A 250-amino-acid chain; its full sequence is Ubiquitin-conjugating enzyme E2 6 (250 aa).

The Cytoplasmic portion of the chain corresponds to 1 to 232 (MATKQAHKRL…DGKEPNDSSS (232 aa)). The UBC core domain occupies 5–167 (QAHKRLTKEY…VQENVETLEK (163 aa)). The active-site Glycyl thioester intermediate is cysteine 87. Phosphoserine is present on serine 139. The residue at position 178 (threonine 178) is a Phosphothreonine. Positions 209-229 (AEQALRQSENNSKKDGKEPND) are disordered. Residues 219-228 (NSKKDGKEPN) are compositionally biased toward basic and acidic residues. A helical transmembrane segment spans residues 233–249 (MVYIGIAIFLFLVGLFM).

It belongs to the ubiquitin-conjugating enzyme family.

It is found in the endoplasmic reticulum membrane. The enzyme catalyses S-ubiquitinyl-[E1 ubiquitin-activating enzyme]-L-cysteine + [E2 ubiquitin-conjugating enzyme]-L-cysteine = [E1 ubiquitin-activating enzyme]-L-cysteine + S-ubiquitinyl-[E2 ubiquitin-conjugating enzyme]-L-cysteine.. It functions in the pathway protein modification; protein ubiquitination. In terms of biological role, catalyzes the covalent attachment of ubiquitin to other proteins. Functions in degradation of misfolded or regulated proteins localized in the endoplasmic reticulum (ER) lumen or membrane via the ubiquitin-proteasome system. Cognate E2 conjugating enzyme for the DOA10 ubiquitin ligase complex, which is part of the ERAD-C pathway responsible for the rapid degradation of membrane proteins with misfolded cytoplasmic domains. This chain is Ubiquitin-conjugating enzyme E2 6 (UBC6), found in Saccharomyces cerevisiae (strain ATCC 204508 / S288c) (Baker's yeast).